The following is a 447-amino-acid chain: UPF0210 protein LBUL_0934 (447 aa).

This sequence belongs to the UPF0210 family. Homodimer.

The sequence is that of UPF0210 protein LBUL_0934 from Lactobacillus delbrueckii subsp. bulgaricus (strain ATCC BAA-365 / Lb-18).